The sequence spans 248 residues: MSAMEKLRLGVNIDHVATLRNARGGALPDPVRAAVLAEQAGADGITAHLREDRRHIRDADIAAIMEAITIPLNFEMAATDEMQEIALGHLPHAACIVPERREERTTEGGLEVAGDDNRLAQYIAPLKDAGIRVSLFIAAERSQIEAAARIGAPVIELHTGAYCDYDAEGDVAARDAELARLIAGAKLGVELGLEVHMGHGLNYDTVAPIAALPEVAELNIGHFLIGESIFVGLEAAMTEMRARMDAAR.

3-amino-2-oxopropyl phosphate is bound at residue N12. 14-15 serves as a coordination point for 1-deoxy-D-xylulose 5-phosphate; that stretch reads DH. 3-amino-2-oxopropyl phosphate is bound at residue R23. H48 (proton acceptor) is an active-site residue. 1-deoxy-D-xylulose 5-phosphate contacts are provided by R50 and H55. The active-site Proton acceptor is the E75. T105 is a binding site for 1-deoxy-D-xylulose 5-phosphate. Residue H199 is the Proton donor of the active site. 3-amino-2-oxopropyl phosphate contacts are provided by residues G200 and 221-222; that span reads GH.

Belongs to the PNP synthase family. In terms of assembly, homooctamer; tetramer of dimers.

It is found in the cytoplasm. The catalysed reaction is 3-amino-2-oxopropyl phosphate + 1-deoxy-D-xylulose 5-phosphate = pyridoxine 5'-phosphate + phosphate + 2 H2O + H(+). Its pathway is cofactor biosynthesis; pyridoxine 5'-phosphate biosynthesis; pyridoxine 5'-phosphate from D-erythrose 4-phosphate: step 5/5. In terms of biological role, catalyzes the complicated ring closure reaction between the two acyclic compounds 1-deoxy-D-xylulose-5-phosphate (DXP) and 3-amino-2-oxopropyl phosphate (1-amino-acetone-3-phosphate or AAP) to form pyridoxine 5'-phosphate (PNP) and inorganic phosphate. The chain is Pyridoxine 5'-phosphate synthase from Jannaschia sp. (strain CCS1).